A 249-amino-acid polypeptide reads, in one-letter code: Proteasome activator complex subunit 1 (249 aa).

The tract at residues S55–G102 is disordered. The segment covering P68 to G98 has biased composition (basic and acidic residues).

It belongs to the PA28 family. In terms of assembly, heterodimer of PSME1 and PSME2, which forms a hexameric ring. PSME1 can form homoheptamers.

In terms of biological role, implicated in immunoproteasome assembly and required for efficient antigen processing. The PA28 activator complex enhances the generation of class I binding peptides by altering the cleavage pattern of the proteasome. This Bos taurus (Bovine) protein is Proteasome activator complex subunit 1 (PSME1).